A 289-amino-acid polypeptide reads, in one-letter code: 4-hydroxy-tetrahydrodipicolinate synthase (289 aa).

A pyruvate-binding site is contributed by T44. The Proton donor/acceptor role is filled by Y130. Catalysis depends on K158, which acts as the Schiff-base intermediate with substrate. I200 is a binding site for pyruvate.

Belongs to the DapA family. In terms of assembly, homotetramer; dimer of dimers.

The protein resides in the cytoplasm. It catalyses the reaction L-aspartate 4-semialdehyde + pyruvate = (2S,4S)-4-hydroxy-2,3,4,5-tetrahydrodipicolinate + H2O + H(+). It participates in amino-acid biosynthesis; L-lysine biosynthesis via DAP pathway; (S)-tetrahydrodipicolinate from L-aspartate: step 3/4. Functionally, catalyzes the condensation of (S)-aspartate-beta-semialdehyde [(S)-ASA] and pyruvate to 4-hydroxy-tetrahydrodipicolinate (HTPA). The polypeptide is 4-hydroxy-tetrahydrodipicolinate synthase (Archaeoglobus fulgidus (strain ATCC 49558 / DSM 4304 / JCM 9628 / NBRC 100126 / VC-16)).